A 326-amino-acid polypeptide reads, in one-letter code: Septum site-determining protein minD homolog, chloroplastic (326 aa).

Residues 1-62 (MASLRLFSTN…LAGETPRIVV (62 aa)) constitute a chloroplast transit peptide. Residue 67-74 (KGGVGKTT) coordinates ATP.

It belongs to the ParA family. MinD subfamily. Homodimer. Interacts with MINE1. Binds to ARC3. Interacts with MCD1. Interacts with CDP1/PARC6.

The protein resides in the plastid. The protein localises to the chloroplast inner membrane. Stimulated ATPase activity by MINE1. Together with ARC3 and MCD1, regulates FtsZ ring positioning in chloroplasts in an ARC6-dependent manner. Calcium-dependent ATPase required for the correct placement of the plastid division site. Inhibits FtsZ filament and ring formation in the plastid. Mediates inhibition of plastid division. In cooperation with MINE1, prevents FtsZ ring formation anywhere outside of the mid-plastids. The polypeptide is Septum site-determining protein minD homolog, chloroplastic (Arabidopsis thaliana (Mouse-ear cress)).